The primary structure comprises 398 residues: Bombesin receptor subtype-3 (398 aa).

Topologically, residues 1 to 40 (MAQRQPHSPNQTLISITNDTESSSVVSNDNTNKGRSGDNS) are extracellular. Asparagine 10 and asparagine 18 each carry an N-linked (GlcNAc...) asparagine glycan. The chain crosses the membrane as a helical span at residues 41-62 (PGIEALCAIYITYAVIISVGIL). Over 63-81 (GNAILIKVFFKTKSMQTVP) the chain is Cytoplasmic. A helical transmembrane segment spans residues 82 to 102 (NIFITSLAFGDLLLLLTCVPV). Topologically, residues 103–120 (DATHYLAEGWLFGRIGCK) are extracellular. An intrachain disulfide couples cysteine 119 to cysteine 202. The helical transmembrane segment at 121–142 (VLSFIRLTSVGVSVFTLTILSA) threads the bilayer. The Cytoplasmic portion of the chain corresponds to 143-162 (DRYKAVVKPLERQPSNAILK). Residues 163-183 (TCIKAGCVWIVSMIFALPEAI) traverse the membrane as a helical segment. Residues 184-219 (FSNVYSFRDPNKNVTFESCTSYPVSKKLLQEIHSLL) lie on the Extracellular side of the membrane. The helical transmembrane segment at 220-240 (CFLVFYIIPLSIISVYYSLIA) threads the bilayer. At 241–271 (RTLYKSTLNIPTEEQGHARKQIESRKRIART) the chain is on the cytoplasmic side. The chain crosses the membrane as a helical span at residues 272–292 (VLVLVALFALCWLPNHLLYLY). Topologically, residues 293–312 (HSFTSQTYVDPSAMHFIFTI) are extracellular. The helical transmembrane segment at 313–332 (FSRVLAFSNSCVNPFALYWL) threads the bilayer. Topologically, residues 333 to 398 (SKTFQKHFKA…CSVKQAEDRV (66 aa)) are cytoplasmic. A lipid anchor (S-palmitoyl cysteine) is attached at cysteine 346.

This sequence belongs to the G-protein coupled receptor 1 family. As to quaternary structure, interacts with C6orf89.

Its subcellular location is the cell membrane. In terms of biological role, role in sperm cell division, maturation, or function. This receptor mediates its action by association with G proteins that activate a phosphatidylinositol-calcium second messenger system. This chain is Bombesin receptor subtype-3 (BRS3), found in Macaca mulatta (Rhesus macaque).